Reading from the N-terminus, the 406-residue chain is COP9 signalosome complex subunit 4 (406 aa).

N-acetylalanine is present on Ala-2. Residue Lys-25 is modified to N6-acetyllysine. The PCI domain maps to 197-366; sequence YRRKFIEAAQ…GIVHFETREA (170 aa).

The protein belongs to the CSN4 family. Component of the CSN complex, composed of COPS1/GPS1, COPS2, COPS3, COPS4, COPS5, COPS6, COPS7 (COPS7A or COPS7B), COPS8 and COPS9. In the complex, it probably interacts directly with COPS1, COPS2, COPS3, COPS5, COPS6, COPS7 (COPS7A or COPS7B) and COPS8. Interacts with TOR1A; the interaction is direct and associates TOR1A and SNAPIN with the CSN complex. Interacts with STON2; controls STON2 neddylation levels. Interacts with ERCC6.

The protein localises to the cytoplasm. It is found in the nucleus. It localises to the cytoplasmic vesicle. Its subcellular location is the secretory vesicle. The protein resides in the synaptic vesicle. Component of the COP9 signalosome complex (CSN), a complex involved in various cellular and developmental processes. The CSN complex is an essential regulator of the ubiquitin (Ubl) conjugation pathway by mediating the deneddylation of the cullin subunits of SCF-type E3 ligase complexes, leading to decrease the Ubl ligase activity of SCF-type complexes such as SCF, CSA or DDB2. Also involved in the deneddylation of non-cullin subunits such as STON2. The complex is also involved in phosphorylation of p53/TP53, c-jun/JUN, IkappaBalpha/NFKBIA, ITPK1, IRF8/ICSBP and SNAPIN, possibly via its association with CK2 and PKD kinases. CSN-dependent phosphorylation of TP53 and JUN promotes and protects degradation by the Ubl system, respectively. The chain is COP9 signalosome complex subunit 4 (Cops4) from Mus musculus (Mouse).